Here is a 341-residue protein sequence, read N- to C-terminus: Tetraacyldisaccharide 4'-kinase (341 aa).

Residue 57-64 participates in ATP binding; that stretch reads TVGGTGKT.

This sequence belongs to the LpxK family.

The enzyme catalyses a lipid A disaccharide + ATP = a lipid IVA + ADP + H(+). Its pathway is glycolipid biosynthesis; lipid IV(A) biosynthesis; lipid IV(A) from (3R)-3-hydroxytetradecanoyl-[acyl-carrier-protein] and UDP-N-acetyl-alpha-D-glucosamine: step 6/6. Transfers the gamma-phosphate of ATP to the 4'-position of a tetraacyldisaccharide 1-phosphate intermediate (termed DS-1-P) to form tetraacyldisaccharide 1,4'-bis-phosphate (lipid IVA). The chain is Tetraacyldisaccharide 4'-kinase from Maricaulis maris (strain MCS10) (Caulobacter maris).